The sequence spans 252 residues: Isoprenyl transferase (252 aa).

Asp32 is an active-site residue. Position 32 (Asp32) interacts with Mg(2+). Substrate contacts are provided by residues 33-36 (GNGR), Trp37, Arg45, His49, and 77-79 (STE). Asn80 functions as the Proton acceptor in the catalytic mechanism. Substrate contacts are provided by residues Trp81, Arg83, Arg200, and 206 to 208 (RLS). A Mg(2+)-binding site is contributed by Glu219.

The protein belongs to the UPP synthase family. As to quaternary structure, homodimer. Mg(2+) is required as a cofactor.

Its function is as follows. Catalyzes the condensation of isopentenyl diphosphate (IPP) with allylic pyrophosphates generating different type of terpenoids. This is Isoprenyl transferase from Oceanobacillus iheyensis (strain DSM 14371 / CIP 107618 / JCM 11309 / KCTC 3954 / HTE831).